We begin with the raw amino-acid sequence, 1070 residues long: Error-prone DNA polymerase (1070 aa).

This sequence belongs to the DNA polymerase type-C family. DnaE2 subfamily.

Its subcellular location is the cytoplasm. It carries out the reaction DNA(n) + a 2'-deoxyribonucleoside 5'-triphosphate = DNA(n+1) + diphosphate. Functionally, DNA polymerase involved in damage-induced mutagenesis and translesion synthesis (TLS). It is not the major replicative DNA polymerase. This is Error-prone DNA polymerase from Aromatoleum aromaticum (strain DSM 19018 / LMG 30748 / EbN1) (Azoarcus sp. (strain EbN1)).